We begin with the raw amino-acid sequence, 259 residues long: Aspartate/glutamate leucyltransferase (259 aa).

Belongs to the R-transferase family. Bpt subfamily.

The protein resides in the cytoplasm. It catalyses the reaction N-terminal L-glutamyl-[protein] + L-leucyl-tRNA(Leu) = N-terminal L-leucyl-L-glutamyl-[protein] + tRNA(Leu) + H(+). The catalysed reaction is N-terminal L-aspartyl-[protein] + L-leucyl-tRNA(Leu) = N-terminal L-leucyl-L-aspartyl-[protein] + tRNA(Leu) + H(+). Functions in the N-end rule pathway of protein degradation where it conjugates Leu from its aminoacyl-tRNA to the N-termini of proteins containing an N-terminal aspartate or glutamate. This Rhizobium meliloti (strain 1021) (Ensifer meliloti) protein is Aspartate/glutamate leucyltransferase.